The sequence spans 180 residues: UPF0743 protein C215.06c (180 aa).

C2HC LYAR-type zinc fingers lie at residues 1–26 and 27–51; these read MVSF…SRCH and GAYF…TSCM. Zn(2+) contacts are provided by Cys-6, Cys-9, His-21, Cys-25, Cys-32, Cys-35, His-47, and Cys-50. The disordered stretch occupies residues 61–125; the sequence is LYRPTKKELK…KETVSSPAEQ (65 aa). Over residues 77 to 95 the composition is skewed to polar residues; that stretch reads NAVNSKELSPNTDNQNTPA. Ser-85 is subject to Phosphoserine. Basic and acidic residues predominate over residues 100-111; that stretch reads HSLDENEKDKEN.

This sequence belongs to the UPF0743 family.

It localises to the nucleus. The sequence is that of UPF0743 protein C215.06c from Schizosaccharomyces pombe (strain 972 / ATCC 24843) (Fission yeast).